We begin with the raw amino-acid sequence, 158 residues long: Endoribonuclease YbeY (158 aa).

Residues H118, H122, and H128 each contribute to the Zn(2+) site.

This sequence belongs to the endoribonuclease YbeY family. Zn(2+) serves as cofactor.

Its subcellular location is the cytoplasm. Its function is as follows. Single strand-specific metallo-endoribonuclease involved in late-stage 70S ribosome quality control and in maturation of the 3' terminus of the 16S rRNA. This Bartonella quintana (strain Toulouse) (Rochalimaea quintana) protein is Endoribonuclease YbeY.